The sequence spans 295 residues: MSIWAIGDLQGCYDATQRLLENIRFDPSQDTLWFCGDLVNRGGQSLETLRLVHSLRSHSVVVLGNHDLSLLAVTVRSEEEQRKVNPDLLRIITAEDRDEILTWLRMQKLIHVDRTIGWMMVHAGLAPKWTTQMAEKLAHEVEQQLHGTDYRKLLHSMYGDKPEWSPALSGCNRSRAIINVLTRMRYCTPRGRISTEDKGTPGTQTQGMYPWFEVPGRVERDLKIVCGHWSTLGLTITQGIHAIDTGAVWGGKLTALQIDTDELRLAQVHGLSIEHPRHTHTPRRKAKKRHKRSPK.

The interval 271 to 295 (LSIEHPRHTHTPRRKAKKRHKRSPK) is disordered. Over residues 277–295 (RHTHTPRRKAKKRHKRSPK) the composition is skewed to basic residues.

It belongs to the Ap4A hydrolase family.

The catalysed reaction is P(1),P(4)-bis(5'-adenosyl) tetraphosphate + H2O = 2 ADP + 2 H(+). In terms of biological role, hydrolyzes diadenosine 5',5'''-P1,P4-tetraphosphate to yield ADP. The chain is Bis(5'-nucleosyl)-tetraphosphatase, symmetrical from Xylella fastidiosa (strain M23).